The primary structure comprises 207 residues: Large ribosomal subunit protein bL17m (207 aa).

Over residues 173–200 the composition is skewed to basic and acidic residues; it reads EKESEHARLKEDHEDEKTVKKDWKRGDP. The disordered stretch occupies residues 173-207; it reads EKESEHARLKEDHEDEKTVKKDWKRGDPIPRPTYI.

The protein belongs to the bacterial ribosomal protein bL17 family. In terms of assembly, component of the mitochondrial large ribosomal subunit (mt-LSU). Mature yeast 74S mitochondrial ribosomes consist of a small (37S) and a large (54S) subunit. The 37S small subunit contains a 15S ribosomal RNA (15S mt-rRNA) and at least 32 different proteins. The 54S large subunit contains a 21S rRNA (21S mt-rRNA) and at least 45 different proteins.

The protein localises to the mitochondrion. In terms of biological role, component of the mitochondrial ribosome (mitoribosome), a dedicated translation machinery responsible for the synthesis of mitochondrial genome-encoded proteins, including at least some of the essential transmembrane subunits of the mitochondrial respiratory chain. The mitoribosomes are attached to the mitochondrial inner membrane and translation products are cotranslationally integrated into the membrane. This Schizosaccharomyces pombe (strain 972 / ATCC 24843) (Fission yeast) protein is Large ribosomal subunit protein bL17m (mrpl8).